The primary structure comprises 294 residues: Protein ATC1/LIC4 (294 aa).

The tract at residues Tyr114 to Asn178 is disordered. Basic and acidic residues predominate over residues His130–Thr145. Over residues Leu153–Ser175 the composition is skewed to low complexity.

Its subcellular location is the cytoplasm. It localises to the nucleus. Functionally, involved in cation homeostasis and in the regulation of the cation stress signaling cascades. Also involved in bipolar budding. This chain is Protein ATC1/LIC4 (ATC1), found in Saccharomyces cerevisiae (strain ATCC 204508 / S288c) (Baker's yeast).